The following is a 237-amino-acid chain: Concanavalin-A (237 aa).

Mn(2+)-binding residues include Glu-8 and Asp-10. Residues Asp-10, Tyr-12, Asn-14, and Asp-19 each contribute to the Ca(2+) site. Tyr-12 contacts a carbohydrate. Mn(2+) is bound by residues Asp-19 and His-24. 99–100 (LY) serves as a coordination point for a carbohydrate. Asp-208 is a Ca(2+) binding site. Arg-228 provides a ligand contact to a carbohydrate.

This sequence belongs to the leguminous lectin family. Homotetramer.

Its function is as follows. Glucose/D-mannose specific lectin. This is Concanavalin-A from Canavalia lineata (Beach bean).